Here is a 473-residue protein sequence, read N- to C-terminus: Photosystem II CP43 reaction center protein (473 aa).

Positions 1-14 (MKTLYSLRRFYPVE) are excised as a propeptide. An N-acetylthreonine modification is found at Thr-15. Thr-15 is modified (phosphothreonine). Helical transmembrane passes span 69 to 93 (LFEV…PHLA), 134 to 155 (LLGP…KDRN), 178 to 200 (KALY…RKIT), 255 to 275 (KPFA…LSYS), and 291 to 312 (WFNN…ASQA). [CaMn4O5] cluster is bound at residue Glu-367. A helical membrane pass occupies residues 447–471 (RARAAAAGFEKGIDRDLEPVLSMTP).

This sequence belongs to the PsbB/PsbC family. PsbC subfamily. In terms of assembly, PSII is composed of 1 copy each of membrane proteins PsbA, PsbB, PsbC, PsbD, PsbE, PsbF, PsbH, PsbI, PsbJ, PsbK, PsbL, PsbM, PsbT, PsbX, PsbY, PsbZ, Psb30/Ycf12, at least 3 peripheral proteins of the oxygen-evolving complex and a large number of cofactors. It forms dimeric complexes. It depends on Binds multiple chlorophylls and provides some of the ligands for the Ca-4Mn-5O cluster of the oxygen-evolving complex. It may also provide a ligand for a Cl- that is required for oxygen evolution. PSII binds additional chlorophylls, carotenoids and specific lipids. as a cofactor.

The protein localises to the plastid. The protein resides in the chloroplast thylakoid membrane. In terms of biological role, one of the components of the core complex of photosystem II (PSII). It binds chlorophyll and helps catalyze the primary light-induced photochemical processes of PSII. PSII is a light-driven water:plastoquinone oxidoreductase, using light energy to abstract electrons from H(2)O, generating O(2) and a proton gradient subsequently used for ATP formation. The sequence is that of Photosystem II CP43 reaction center protein from Dioscorea elephantipes (Elephant's foot yam).